We begin with the raw amino-acid sequence, 134 residues long: Holo-[acyl-carrier-protein] synthase (134 aa).

Mg(2+)-binding residues include D8 and E59.

This sequence belongs to the P-Pant transferase superfamily. AcpS family. It depends on Mg(2+) as a cofactor.

It is found in the cytoplasm. It carries out the reaction apo-[ACP] + CoA = holo-[ACP] + adenosine 3',5'-bisphosphate + H(+). Its function is as follows. Transfers the 4'-phosphopantetheine moiety from coenzyme A to a Ser of acyl-carrier-protein. This is Holo-[acyl-carrier-protein] synthase from Zymomonas mobilis subsp. mobilis (strain ATCC 31821 / ZM4 / CP4).